Consider the following 669-residue polypeptide: Putative transcription factor SOX-14 (669 aa).

The segment covering 1–12 has biased composition (polar residues); sequence MIAKPNQATTEP. 3 disordered regions span residues 1–149, 254–336, and 419–439; these read MIAK…EMTL, YKYR…PKYE, and SSLT…MDNI. Positions 17 to 37 are enriched in low complexity; that stretch reads RPGTVPTVPATTPARPATITI. Positions 52–71 are enriched in pro residues; sequence TLPPFSPSPSPASSPSPAPA. A compositionally biased stretch (polar residues) spans 75-84; that stretch reads GAQKTQSQAA. Over residues 88–105 the composition is skewed to low complexity; that stretch reads PAAVASPSAPVAAAAPKT. Over residues 130–145 the composition is skewed to basic and acidic residues; sequence RESEMDGERSPSHSGH. Residues 187–255 constitute a DNA-binding region (HMG box); that stretch reads IKRPMNAFMV…LHMIEYPNYK (69 aa). Residues 284–294 show a composition bias toward low complexity; that stretch reads TTNNNNSLTTL. Over residues 295-318 the composition is skewed to polar residues; sequence AINGTTTAGRKSKRSTSTCQSGSA. Residues 322-336 show a composition bias toward basic and acidic residues; it reads LRNDSGDTSSKPKYE. Positions 419–431 are enriched in polar residues; it reads SSLTQSQHNQSDP.

It is found in the nucleus. This Drosophila melanogaster (Fruit fly) protein is Putative transcription factor SOX-14 (Sox14).